Consider the following 211-residue polypeptide: Chaperone protein TorD (211 aa).

Belongs to the TorD/DmsD family. TorD subfamily.

The protein localises to the cytoplasm. Functionally, involved in the biogenesis of TorA. Acts on TorA before the insertion of the molybdenum cofactor and, as a result, probably favors a conformation of the apoenzyme that is competent for acquiring the cofactor. The polypeptide is Chaperone protein TorD (Shewanella loihica (strain ATCC BAA-1088 / PV-4)).